The sequence spans 482 residues: tRNA sulfurtransferase (482 aa).

Residues 61–165 (LAIRDALTRI…DDRLLLIKGR (105 aa)) form the THUMP domain. Residues 183–184 (LI), K265, G287, and Q296 each bind ATP. A disulfide bond links C344 and C456. One can recognise a Rhodanese domain in the interval 404–482 (FGPNDVILDI…GFNNVKVYRP (79 aa)). The active-site Cysteine persulfide intermediate is the C456.

This sequence belongs to the ThiI family.

It is found in the cytoplasm. It carries out the reaction [ThiI sulfur-carrier protein]-S-sulfanyl-L-cysteine + a uridine in tRNA + 2 reduced [2Fe-2S]-[ferredoxin] + ATP + H(+) = [ThiI sulfur-carrier protein]-L-cysteine + a 4-thiouridine in tRNA + 2 oxidized [2Fe-2S]-[ferredoxin] + AMP + diphosphate. The enzyme catalyses [ThiS sulfur-carrier protein]-C-terminal Gly-Gly-AMP + S-sulfanyl-L-cysteinyl-[cysteine desulfurase] + AH2 = [ThiS sulfur-carrier protein]-C-terminal-Gly-aminoethanethioate + L-cysteinyl-[cysteine desulfurase] + A + AMP + 2 H(+). Its pathway is cofactor biosynthesis; thiamine diphosphate biosynthesis. Functionally, catalyzes the ATP-dependent transfer of a sulfur to tRNA to produce 4-thiouridine in position 8 of tRNAs, which functions as a near-UV photosensor. Also catalyzes the transfer of sulfur to the sulfur carrier protein ThiS, forming ThiS-thiocarboxylate. This is a step in the synthesis of thiazole, in the thiamine biosynthesis pathway. The sulfur is donated as persulfide by IscS. This is tRNA sulfurtransferase from Escherichia fergusonii (strain ATCC 35469 / DSM 13698 / CCUG 18766 / IAM 14443 / JCM 21226 / LMG 7866 / NBRC 102419 / NCTC 12128 / CDC 0568-73).